The following is a 1116-amino-acid chain: cGMP-specific 3',5'-cyclic phosphodiesterase (1116 aa).

Disordered regions lie at residues Met-1–Ala-36 and Lys-82–Gln-136. Residues Val-15–Ser-28 show a composition bias toward low complexity. Polar residues predominate over residues His-86 to Gln-136. 2 GAF domains span residues Asp-241 to Ile-393 and Asn-425 to Ile-611. A PDEase domain is found at Ser-641 to Val-964. Residue His-717 is the Proton donor of the active site. A divalent metal cation is bound by residues His-721, His-757, Asp-758, and Asp-868. Disordered stretches follow at residues Gln-1005–Lys-1031 and His-1067–Leu-1116. 2 stretches are compositionally biased toward basic and acidic residues: residues Glu-1014–Arg-1023 and His-1067–Ser-1076. Over residues Ser-1085–Val-1103 the composition is skewed to low complexity. The segment covering Ser-1106–Leu-1116 has biased composition (basic residues). The residue at position 1113 (Cys-1113) is a Cysteine methyl ester. The S-farnesyl cysteine moiety is linked to residue Cys-1113. The propeptide at Ala-1114–Leu-1116 is removed in mature form.

Belongs to the cyclic nucleotide phosphodiesterase family. Interacts with PrBP. Requires a divalent metal cation as cofactor.

It is found in the cell membrane. It carries out the reaction 3',5'-cyclic GMP + H2O = GMP + H(+). Functionally, has a role regulating cGMP transport in Malpighian tubule principal cells. This is cGMP-specific 3',5'-cyclic phosphodiesterase from Drosophila mojavensis (Fruit fly).